The following is a 197-amino-acid chain: Ribosome maturation factor RimP (197 aa).

Belongs to the RimP family.

It localises to the cytoplasm. Its function is as follows. Required for maturation of 30S ribosomal subunits. The polypeptide is Ribosome maturation factor RimP (Acidovorax sp. (strain JS42)).